A 77-amino-acid chain; its full sequence is U8-lycotoxin-Ls1m (77 aa).

Residues 1–20 (MKLMIFTGLFLFAIVSLIEA) form the signal peptide. Positions 21–26 (QAENEK) are excised as a propeptide.

The protein belongs to the neurotoxin 19 (CSTX) family. 08 (U8-Lctx) subfamily. Contains 4 disulfide bonds. As to expression, expressed by the venom gland.

It is found in the secreted. This is U8-lycotoxin-Ls1m from Lycosa singoriensis (Wolf spider).